Consider the following 191-residue polypeptide: Decorin-binding protein A (191 aa).

An N-terminal signal peptide occupies residues 1-29 (MIKCNNKTFNNLLKLTILVNLLISCGLTG).

Belongs to the decorin-binding protein family.

Binds to decorin which may mediate the adherence of B.burgdorferi to collagen fibers in skin and other tissues. The protein is Decorin-binding protein A (dbpA) of Borreliella burgdorferi (strain ATCC 35210 / DSM 4680 / CIP 102532 / B31) (Borrelia burgdorferi).